Here is a 449-residue protein sequence, read N- to C-terminus: Exodeoxyribonuclease 7 large subunit (449 aa).

This sequence belongs to the XseA family. As to quaternary structure, heterooligomer composed of large and small subunits.

The protein resides in the cytoplasm. It catalyses the reaction Exonucleolytic cleavage in either 5'- to 3'- or 3'- to 5'-direction to yield nucleoside 5'-phosphates.. Bidirectionally degrades single-stranded DNA into large acid-insoluble oligonucleotides, which are then degraded further into small acid-soluble oligonucleotides. In Latilactobacillus sakei subsp. sakei (strain 23K) (Lactobacillus sakei subsp. sakei), this protein is Exodeoxyribonuclease 7 large subunit.